A 142-amino-acid chain; its full sequence is Salivary protein 15b (142 aa).

The N-terminal stretch at 1–20 (MKYLGLALISAVFLIGTCQA) is a signal peptide. Cystine bridges form between Cys27-Cys44, Cys40-Cys108, and Cys91-Cys117.

The protein belongs to the PBP/GOBP family. As to expression, female salivary gland.

It localises to the secreted. Its function is as follows. Inhibits contact coagulation pathway activation in the host by sequestering anionic polymers, such as dextran sulfate and heparin, and thus blocking interaction of protein components of the pathway with negatively charged surfaces. Inhibits dextran sulfate-mediated autoactivation of host coagulation factor XII (F12). Inhibits dextran sulfate-mediated activation of host factor XI (F11) by activated F12. Inhibits polyphosphate-induced plasma extravasation at the injection site in mouse model, probably via inhibition of bradykinin generation in host skin. This chain is Salivary protein 15b, found in Phlebotomus duboscqi (Sandfly).